Reading from the N-terminus, the 276-residue chain is Bis(5'-nucleosyl)-tetraphosphatase, symmetrical (276 aa).

The protein belongs to the Ap4A hydrolase family.

The catalysed reaction is P(1),P(4)-bis(5'-adenosyl) tetraphosphate + H2O = 2 ADP + 2 H(+). Its function is as follows. Hydrolyzes diadenosine 5',5'''-P1,P4-tetraphosphate to yield ADP. The polypeptide is Bis(5'-nucleosyl)-tetraphosphatase, symmetrical (Legionella pneumophila subsp. pneumophila (strain Philadelphia 1 / ATCC 33152 / DSM 7513)).